We begin with the raw amino-acid sequence, 538 residues long: Putative cysteine ligase BshC (538 aa).

Positions 460 to 484 (KINEQIELLERMLKRNVEKKHEVEL) form a coiled coil.

It belongs to the BshC family.

In terms of biological role, involved in bacillithiol (BSH) biosynthesis. May catalyze the last step of the pathway, the addition of cysteine to glucosamine malate (GlcN-Mal) to generate BSH. The protein is Putative cysteine ligase BshC of Bacillus cereus (strain ZK / E33L).